The following is a 256-amino-acid chain: Thiazole synthase (256 aa).

K95 acts as the Schiff-base intermediate with DXP in catalysis. 1-deoxy-D-xylulose 5-phosphate-binding positions include G156, 182 to 183, and 204 to 205; these read AG and NT.

The protein belongs to the ThiG family. Homotetramer. Forms heterodimers with either ThiH or ThiS.

The protein localises to the cytoplasm. It catalyses the reaction [ThiS sulfur-carrier protein]-C-terminal-Gly-aminoethanethioate + 2-iminoacetate + 1-deoxy-D-xylulose 5-phosphate = [ThiS sulfur-carrier protein]-C-terminal Gly-Gly + 2-[(2R,5Z)-2-carboxy-4-methylthiazol-5(2H)-ylidene]ethyl phosphate + 2 H2O + H(+). It participates in cofactor biosynthesis; thiamine diphosphate biosynthesis. In terms of biological role, catalyzes the rearrangement of 1-deoxy-D-xylulose 5-phosphate (DXP) to produce the thiazole phosphate moiety of thiamine. Sulfur is provided by the thiocarboxylate moiety of the carrier protein ThiS. In vitro, sulfur can be provided by H(2)S. This chain is Thiazole synthase, found in Shigella boydii serotype 18 (strain CDC 3083-94 / BS512).